Here is a 247-residue protein sequence, read N- to C-terminus: Phycocyanobilin:ferredoxin oxidoreductase (247 aa).

It belongs to the HY2 family.

It carries out the reaction (2R,3Z)-phycocyanobilin + 4 oxidized [2Fe-2S]-[ferredoxin] = biliverdin IXalpha + 4 reduced [2Fe-2S]-[ferredoxin] + 4 H(+). Catalyzes the four-electron reduction of biliverdin IX-alpha (2-electron reduction at both the A and D rings); the reaction proceeds via an isolatable 2-electron intermediate, 181,182-dihydrobiliverdin. The sequence is that of Phycocyanobilin:ferredoxin oxidoreductase (pcyA) from Prochlorococcus marinus (strain SARG / CCMP1375 / SS120).